The primary structure comprises 911 residues: Protein translocase subunit SecA (911 aa).

ATP contacts are provided by residues Gln86, 104-108 (GEGKT), and Asp494. Residues 856-911 (VEGIDAPQRPAQLRFTGPSEDGQSAVTRSGTDSGATVAAGTNRRSRRQAERRGRRG) form a disordered region. Residues 876–889 (DGQSAVTRSGTDSG) show a composition bias toward polar residues. Positions 902–911 (RQAERRGRRG) are enriched in basic and acidic residues.

The protein belongs to the SecA family. Monomer and homodimer. Part of the essential Sec protein translocation apparatus which comprises SecA, SecYEG and auxiliary proteins SecDF. Other proteins may also be involved.

It localises to the cell membrane. Its subcellular location is the cytoplasm. The enzyme catalyses ATP + H2O + cellular proteinSide 1 = ADP + phosphate + cellular proteinSide 2.. Its function is as follows. Part of the Sec protein translocase complex. Interacts with the SecYEG preprotein conducting channel. Has a central role in coupling the hydrolysis of ATP to the transfer of proteins into and across the cell membrane, serving as an ATP-driven molecular motor driving the stepwise translocation of polypeptide chains across the membrane. In Micrococcus luteus (strain ATCC 4698 / DSM 20030 / JCM 1464 / CCM 169 / CCUG 5858 / IAM 1056 / NBRC 3333 / NCIMB 9278 / NCTC 2665 / VKM Ac-2230) (Micrococcus lysodeikticus), this protein is Protein translocase subunit SecA.